The sequence spans 186 residues: ATP-dependent protease subunit HslV (186 aa).

T14 is a catalytic residue. Na(+)-binding residues include A168, C171, and T174.

Belongs to the peptidase T1B family. HslV subfamily. As to quaternary structure, a double ring-shaped homohexamer of HslV is capped on each side by a ring-shaped HslU homohexamer. The assembly of the HslU/HslV complex is dependent on binding of ATP.

The protein localises to the cytoplasm. It catalyses the reaction ATP-dependent cleavage of peptide bonds with broad specificity.. With respect to regulation, allosterically activated by HslU binding. Functionally, protease subunit of a proteasome-like degradation complex believed to be a general protein degrading machinery. The sequence is that of ATP-dependent protease subunit HslV from Bradyrhizobium sp. (strain BTAi1 / ATCC BAA-1182).